The following is a 629-amino-acid chain: Coiled-coil domain-containing protein 93 (629 aa).

Positions 1 to 23 are disordered; it reads MGLPKGPEGQGLPEVETREDEEQ. Residues 1 to 428 form a sufficient for interaction with CCDC22 region; that stretch reads MGLPKGPEGQ…ETLKAERAPG (428 aa). Coiled-coil stretches lie at residues 231–430 and 558–599; these read LSAA…PGEK and LRQM…LLEK. A phosphoserine mark is found at Ser-298, Ser-301, and Ser-305. Residues 446 to 629 are sufficient for interaction with WASHC2C; that stretch reads THNEDLDRRY…LLSKIKAKAS (184 aa).

The protein belongs to the CCDC93 family. In terms of assembly, component of the commander complex consisting of the CCC subcomplex and the retriever subcomplex. Component of the CCC (COMMD/CCDC22/CCDC93) subcomplex consisting of COMMD1, COMMD2, COMMD3, COMMD4, COMMD5, COMMD6, COMMD7, COMMD8, COMMD9, COMMD10, CCDC22 and CCDC93. Forms a coiled-coil heterodimer with CCDC22; this heterodimer interacts with the guanine nucleotide exchange factor DENND10; the interaction is direct. Interacts with WASHC1. Interacts directly with WASHC2C. Interacts with SNX17 and SNX31.

The protein localises to the early endosome. Functionally, component of the commander complex that is essential for endosomal recycling of transmembrane cargos; the commander complex is composed of composed of the CCC subcomplex and the retriever subcomplex. Component of the CCC complex, which is involved in the regulation of endosomal recycling of surface proteins, including integrins, signaling receptor and channels. The CCC complex associates with SNX17, retriever and WASH complexes to prevent lysosomal degradation and promote cell surface recycling of numerous cargos such as integrins ITGA5:ITGB1. Involved in copper-dependent ATP7A trafficking between the trans-Golgi network and vesicles in the cell periphery; the function is proposed to depend on its association within the CCC complex and cooperation with the WASH complex on early endosomes and is dependent on its interaction with WASHC2C. The polypeptide is Coiled-coil domain-containing protein 93 (Ccdc93) (Mus musculus (Mouse)).